A 204-amino-acid chain; its full sequence is Carbon disulfide hydrolase (204 aa).

Residues Cys35, His88, and Cys91 each coordinate Zn(2+).

Belongs to the beta-class carbonic anhydrase family. In terms of assembly, forms a hexadecameric catenane homooligomer, through interactions of two interlocked octameric rings. The cofactor is Zn(2+).

It catalyses the reaction carbon disulfide + 2 H2O = 2 hydrogen sulfide + CO2 + 2 H(+). It participates in sulfur metabolism; hydrogen sulfide biosynthesis. Functionally, catalyzes the conversion of carbon disulfide into hydrogen sulfide and carbon dioxide, with carbonyl sulfide as an intermediate. Likely plays a key role in sulfur metabolism in S.solfataricus. Does not show carbonic anhydrase activity (hydration of CO(2) to carbonate). The polypeptide is Carbon disulfide hydrolase (Saccharolobus solfataricus (strain ATCC 35092 / DSM 1617 / JCM 11322 / P2) (Sulfolobus solfataricus)).